The primary structure comprises 472 residues: MERKTVLVIADLGGCPPHMFYKSAAEKYNLVSFIPRPFAITASHAALIEKYSVAVIKDKDYFKSLADFEHPDSIYWAHEDHNKPEEEVVEQIVKVAEMFGADAITTNNELFIAPMAKACERLGLRGAGVQAAENARDKNKMRDAFNKAGVKSIKNKRVTTLEDFRAALEEIGTPLILKPTYLASSIGVTLITDTETAEDEFNRVNDYLKSINVPKAVTFEAPFIAEEFLQGEYGDWYQTEGYSDYISIEGIMADGEYFPIAIHDKTPQIGFTETSHITPSILDEEAKKKIVEAAKKANEGLGLQNCATHTEIKLMKNREPGLIESAARFAGWNMIPNIKKVFGLDMAQLLLDVLCFGKDADLPDGLLDQEPYYVADCHLYPQHFKQNGQIPETAEDLVIEAIDIPDGLLKGDTEIVSFSAAAPGTSVDLTLFEAFNSIAAFELKGSNSQDVAESIRQIQQHAKLTAKYVLPV.

Position 109 (Glu-109) interacts with Mg(2+). 2 residues coordinate ATP: Lys-138 and Lys-178. Residues 142-355 (RDAFNKAGVK…MAQLLLDVLC (214 aa)) enclose the ATP-grasp domain. Position 182 (Leu-182) interacts with Mg(2+). ATP contacts are provided by residues 184-185 (SS), 226-229 (EEFL), and Gln-268. Substrate is bound by residues Glu-273 and 309-311 (HTE). Mg(2+) is bound by residues Glu-311 and Glu-324. 328 to 331 (RFAG) serves as a coordination point for substrate.

Monomer or homodimer. It depends on Mg(2+) as a cofactor.

The catalysed reaction is L-anticapsin + L-alanine + ATP = bacilysin + ADP + phosphate + H(+). It participates in antibiotic biosynthesis; bacilysin biosynthesis. In terms of biological role, part of the bacABCDEFG operon responsible for the biosynthesis of bacilysin, an irreversible inactivator of the glutaminase domain of glucosamine synthetase. Catalyzes the formation of alpha-dipeptides from various L-amino acids in the presence of ATP. In vivo catalyzes the ligation of L-alanine and L-anticapsin (epoxycyclohexanonyl-Ala) to produce the final bacilysin antibiotic (L-Ala-L-4S-cyclohexenonyl-Ala dipeptide). The substrate specificity is restricted to small amino acids such as L-Ala, for the N-terminal end of the dipeptide, whereas a wide range of hydrophobic amino acids such as L-Phe, L-Tyr and L-Met are recognized for the C-terminal end. The sequence is that of Alanine--anticapsin ligase from Bacillus subtilis (strain 168).